The sequence spans 239 residues: Ribosomal RNA small subunit methyltransferase G (239 aa).

S-adenosyl-L-methionine contacts are provided by residues Gly-80, Phe-85, Glu-103 to Ser-105, Ala-131 to Glu-132, and Arg-150.

It belongs to the methyltransferase superfamily. RNA methyltransferase RsmG family.

The protein localises to the cytoplasm. In terms of biological role, specifically methylates the N7 position of a guanine in 16S rRNA. This Caldanaerobacter subterraneus subsp. tengcongensis (strain DSM 15242 / JCM 11007 / NBRC 100824 / MB4) (Thermoanaerobacter tengcongensis) protein is Ribosomal RNA small subunit methyltransferase G.